The primary structure comprises 1189 residues: Pyruvate carboxylase (1189 aa).

The region spanning 21–473 is the Biotin carboxylation domain; the sequence is TMNKILVANR…WTTFIDDTPE (453 aa). Lysine 139, glutamate 223, and histidine 258 together coordinate ATP. The ATP-grasp domain maps to 143-340; the sequence is RNLAYAANVP…IVAAQIQIAA (198 aa). The active site involves arginine 315. The Pyruvate carboxyltransferase domain maps to 559–826; sequence LMIMDTTWRD…ETGIPEANAR (268 aa). Residues 567–571 and arginine 640 contribute to the substrate site; that span reads RDAHQ. Aspartate 568 is a binding site for a divalent metal cation. 3 residues coordinate a divalent metal cation: lysine 736, histidine 766, and histidine 768. Lysine 736 is modified (N6-carboxylysine). Residue threonine 900 participates in substrate binding. The region spanning 1099–1174 is the Biotinyl-binding domain; that stretch reads KADAHNPNEI…DASDLIPKSS (76 aa). An N6-biotinyllysine modification is found at lysine 1140.

Requires biotin as cofactor. Zn(2+) serves as cofactor.

It is found in the cytoplasm. It catalyses the reaction hydrogencarbonate + pyruvate + ATP = oxaloacetate + ADP + phosphate + H(+). The protein operates within carbohydrate biosynthesis; gluconeogenesis. Functionally, pyruvate carboxylase catalyzes a 2-step reaction, involving the ATP-dependent carboxylation of the covalently attached biotin in the first step and the transfer of the carboxyl group to pyruvate in the second. This Komagataella pastoris (Yeast) protein is Pyruvate carboxylase (PYC1).